Here is a 391-residue protein sequence, read N- to C-terminus: Transcription factor TCP3 (391 aa).

The interval 1 to 34 is disordered; that stretch reads MAPDNDHFLDSPSPPLLEMRHHQSATENGGGCGE. One can recognise a TCP domain in the interval 49–107; it reads RKDRHSKVCTAKGPRDRRVRLSAPTAIQFYDVQDRLGFDRPSKAVDWLITKAKSAIDDL. Disordered stretches follow at residues 122–168, 317–345, and 363–391; these read HAAA…PASM, HHHHHHHQQSMTTDDLHHHHPYHIPPGIH, and FRIPARFQGEQEEHGGDNKPSSASSDSRH. A compositionally biased stretch (polar residues) spans 381 to 391; it reads KPSSASSDSRH.

Interacts with SPL. Interacts with KIN10; KIN11 and FLZ3. In terms of tissue distribution, expressed in cotyledons, particularly in the vascular region, in leaves, roots, buds, flowers and immature siliques.

It is found in the nucleus. Functionally, plays a pivotal role in the control of morphogenesis of shoot organs by negatively regulating the expression of boundary-specific genes such as CUC genes, probably through the induction of miRNA (e.g. miR164). Participates in ovule development. This Arabidopsis thaliana (Mouse-ear cress) protein is Transcription factor TCP3 (TCP3).